Here is a 379-residue protein sequence, read N- to C-terminus: MNQAVIVAAKRTAFGKYGGTLKHLEPEQLLKPLFQHFKEKYPEVISKIDDVVLGNVVGNGGNIARKALLEAGLKDSIPGVTIDRQCGSGLESVQYACRMIQAGAGKVYIAGGVESTSRAPWKIKRPHSVYETALPEFYERASFAPEMSDPSMIQGAENVAKMYDVSRGLQDEFAYRSHQLTAENVKNGNISQEILPITVKGEIFNTDESLKSHIPKDNFGRFKPVIKGGTVTAANSCMKNDGAVLLLIMEKDMAYELGFEHGLLFKDGVTVGVDSNFPGIGPVPAISNLLKRNQLTIENIEVIEINEAFSAQVVACQQALNISNTQLNIWGGALASGHPYGASGAQLVTRLFYMFDKETMIASMGIGGGLGNAALFTRF.

Cysteine 86 serves as the catalytic Acyl-thioester intermediate. Histidine 338 functions as the Proton acceptor in the catalytic mechanism.

This sequence belongs to the thiolase-like superfamily. Thiolase family.

In Staphylococcus aureus (strain COL), this protein is Putative acetyl-CoA C-acetyltransferase VraB (vraB).